The following is a 149-amino-acid chain: MTRKQKRLAVIAGGVGFIMVAVLLVLFAFGQSIAYFYMPSDLAKTPVGPGTRIRLGGLVAEGSVKRDTGSTVSFAVTDGTATVPVTYTGILPDLFREGQGVVTEGVFGAGGTLFDADTVLAKHDENYMPKEVADRMKKDGVWKGEGEAK.

At methionine 1 to arginine 7 the chain is on the cytoplasmic side. Residues leucine 8 to alanine 28 traverse the membrane as a helical; Signal-anchor for type II membrane protein segment. The Periplasmic segment spans residues phenylalanine 29–lysine 149. Heme contacts are provided by histidine 123 and tyrosine 127.

Belongs to the CcmE/CycJ family.

It is found in the cell inner membrane. Heme chaperone required for the biogenesis of c-type cytochromes. Transiently binds heme delivered by CcmC and transfers the heme to apo-cytochromes in a process facilitated by CcmF and CcmH. This chain is Cytochrome c-type biogenesis protein CcmE, found in Allorhizobium ampelinum (strain ATCC BAA-846 / DSM 112012 / S4) (Agrobacterium vitis (strain S4)).